The sequence spans 118 residues: UPF0102 protein Franean1_1156 (118 aa).

The protein belongs to the UPF0102 family.

The polypeptide is UPF0102 protein Franean1_1156 (Parafrankia sp. (strain EAN1pec)).